We begin with the raw amino-acid sequence, 255 residues long: Pyrroloquinoline-quinone synthase (255 aa).

This sequence belongs to the PqqC family.

It carries out the reaction 6-(2-amino-2-carboxyethyl)-7,8-dioxo-1,2,3,4,7,8-hexahydroquinoline-2,4-dicarboxylate + 3 O2 = pyrroloquinoline quinone + 2 H2O2 + 2 H2O + H(+). It functions in the pathway cofactor biosynthesis; pyrroloquinoline quinone biosynthesis. Its function is as follows. Ring cyclization and eight-electron oxidation of 3a-(2-amino-2-carboxyethyl)-4,5-dioxo-4,5,6,7,8,9-hexahydroquinoline-7,9-dicarboxylic-acid to PQQ. The sequence is that of Pyrroloquinoline-quinone synthase from Granulibacter bethesdensis (strain ATCC BAA-1260 / CGDNIH1).